The chain runs to 556 residues: Urocanate hydratase (556 aa).

Residues 52–53 (GG), Q130, 176–178 (GMG), E196, R201, 243–244 (NA), 264–268 (QTSAH), 274–275 (YL), and Y323 contribute to the NAD(+) site. C411 is an active-site residue. G493 lines the NAD(+) pocket.

Belongs to the urocanase family. The cofactor is NAD(+).

The protein localises to the cytoplasm. It catalyses the reaction 4-imidazolone-5-propanoate = trans-urocanate + H2O. The protein operates within amino-acid degradation; L-histidine degradation into L-glutamate; N-formimidoyl-L-glutamate from L-histidine: step 2/3. Functionally, catalyzes the conversion of urocanate to 4-imidazolone-5-propionate. The sequence is that of Urocanate hydratase from Rhodospirillum rubrum (strain ATCC 11170 / ATH 1.1.1 / DSM 467 / LMG 4362 / NCIMB 8255 / S1).